Here is a 112-residue protein sequence, read N- to C-terminus: Nitrogen regulatory protein P-II (112 aa).

An O-UMP-tyrosine modification is found at Tyr-51.

The protein belongs to the P(II) protein family. Homotrimer.

It is found in the plastid. The protein localises to the chloroplast. In terms of biological role, P-II indirectly controls the transcription of the glutamine synthetase gene (glnA). P-II prevents NR-II-catalyzed conversion of NR-I to NR-I-phosphate, the transcriptional activator of glnA. When P-II is uridylylated to P-II-UMP, these events are reversed. When the ratio of Gln to 2-ketoglutarate decreases, P-II is uridylylated to P-II-UMP, which causes the deadenylation of glutamine synthetase, so activating the enzyme. The protein is Nitrogen regulatory protein P-II (glnB) of Pyropia yezoensis (Susabi-nori).